A 346-amino-acid chain; its full sequence is Arsenite methyltransferase (346 aa).

This sequence belongs to the methyltransferase superfamily. Arsenite methyltransferase family.

It carries out the reaction arsenic triglutathione + [thioredoxin]-dithiol + S-adenosyl-L-methionine + 2 H2O = methylarsonous acid + [thioredoxin]-disulfide + 3 glutathione + S-adenosyl-L-homocysteine + H(+). The catalysed reaction is arsenic triglutathione + 2 [thioredoxin]-dithiol + 2 S-adenosyl-L-methionine + H2O = dimethylarsinous acid + 2 [thioredoxin]-disulfide + 3 glutathione + 2 S-adenosyl-L-homocysteine + 2 H(+). The enzyme catalyses arsenic triglutathione + 3 [thioredoxin]-dithiol + 3 S-adenosyl-L-methionine = trimethylarsine + 3 [thioredoxin]-disulfide + 3 glutathione + 3 S-adenosyl-L-homocysteine + 3 H(+). Its function is as follows. Catalyzes the transfer of a methyl group from AdoMet to arsenite, producing methylated arsenicals. Involved in the conversion of As(III) to dimethylarsenate as the main product in the medium and also produces dimethylarsine and trimethylarsine gases. Reduces the arsenic toxicity in the cell and may contribute to the global arsenic cycling. This Aquipseudomonas alcaligenes (strain ATCC 14909 / DSM 50342 / CCUG 1425 / JCM 20561 / NBRC 14159 / NCIMB 9945 / NCTC 10367 / 1577) (Pseudomonas alcaligenes) protein is Arsenite methyltransferase.